The sequence spans 330 residues: Malate dehydrogenase (330 aa).

15 to 21 (GGTGQIA) contributes to the NAD(+) binding site. Residues arginine 96 and arginine 102 each contribute to the substrate site. NAD(+) contacts are provided by residues asparagine 109, glutamine 116, and 133–135 (VGN). 2 residues coordinate substrate: asparagine 135 and arginine 166. Histidine 191 (proton acceptor) is an active-site residue.

This sequence belongs to the LDH/MDH superfamily. MDH type 2 family.

It catalyses the reaction (S)-malate + NAD(+) = oxaloacetate + NADH + H(+). Its function is as follows. Catalyzes the reversible oxidation of malate to oxaloacetate. The polypeptide is Malate dehydrogenase (Chlamydia caviae (strain ATCC VR-813 / DSM 19441 / 03DC25 / GPIC) (Chlamydophila caviae)).